The sequence spans 529 residues: Phosphoenolpyruvate carboxykinase (ATP) (529 aa).

Positions 60, 195, and 201 each coordinate substrate. ATP-binding positions include Lys-201, His-220, and 236–244 (GLSGTGKTT). Residues Lys-201 and His-220 each coordinate Mn(2+). Residue Asp-257 participates in Mn(2+) binding. 3 residues coordinate ATP: Glu-285, Arg-323, and Ser-448. Arg-323 contributes to the substrate binding site.

This sequence belongs to the phosphoenolpyruvate carboxykinase (ATP) family. Mn(2+) serves as cofactor.

It is found in the cytoplasm. The enzyme catalyses oxaloacetate + ATP = phosphoenolpyruvate + ADP + CO2. The protein operates within carbohydrate biosynthesis; gluconeogenesis. Involved in the gluconeogenesis. Catalyzes the conversion of oxaloacetate (OAA) to phosphoenolpyruvate (PEP) through direct phosphoryl transfer between the nucleoside triphosphate and OAA. In Geobacter sp. (strain M21), this protein is Phosphoenolpyruvate carboxykinase (ATP).